We begin with the raw amino-acid sequence, 94 residues long: Putative septation protein SpoVG (94 aa).

It belongs to the SpoVG family.

Functionally, could be involved in septation. The protein is Putative septation protein SpoVG of Acetivibrio thermocellus (strain ATCC 27405 / DSM 1237 / JCM 9322 / NBRC 103400 / NCIMB 10682 / NRRL B-4536 / VPI 7372) (Clostridium thermocellum).